The primary structure comprises 104 residues: Large ribosomal subunit protein bL21 (104 aa).

This sequence belongs to the bacterial ribosomal protein bL21 family. As to quaternary structure, part of the 50S ribosomal subunit. Contacts protein L20.

This protein binds to 23S rRNA in the presence of protein L20. The polypeptide is Large ribosomal subunit protein bL21 (Francisella tularensis subsp. tularensis (strain FSC 198)).